The following is a 239-amino-acid chain: Protein GrpE (239 aa).

Disordered regions lie at residues 1-60 (MIEN…SNND) and 208-239 (SMGPGKQKSQQEVEKDTVEGDVDSDANTSEDV). The segment covering 28-42 (SMQNSTTENDELSSQ) has biased composition (polar residues). 2 stretches are compositionally biased toward basic and acidic residues: residues 43–53 (KTEEINTEELK) and 216–225 (SQQEVEKDTV). Residues 226 to 239 (EGDVDSDANTSEDV) show a composition bias toward acidic residues.

It belongs to the GrpE family. Homodimer.

The protein localises to the cytoplasm. Functionally, participates actively in the response to hyperosmotic and heat shock by preventing the aggregation of stress-denatured proteins, in association with DnaK and GrpE. It is the nucleotide exchange factor for DnaK and may function as a thermosensor. Unfolded proteins bind initially to DnaJ; upon interaction with the DnaJ-bound protein, DnaK hydrolyzes its bound ATP, resulting in the formation of a stable complex. GrpE releases ADP from DnaK; ATP binding to DnaK triggers the release of the substrate protein, thus completing the reaction cycle. Several rounds of ATP-dependent interactions between DnaJ, DnaK and GrpE are required for fully efficient folding. This chain is Protein GrpE, found in Prochlorococcus marinus (strain MIT 9301).